The following is a 163-amino-acid chain: Small ribosomal subunit protein uS5 (163 aa).

The 64-residue stretch at Phe8 to Ile71 folds into the S5 DRBM domain.

It belongs to the universal ribosomal protein uS5 family. As to quaternary structure, part of the 30S ribosomal subunit. Contacts proteins S4 and S8.

In terms of biological role, with S4 and S12 plays an important role in translational accuracy. Located at the back of the 30S subunit body where it stabilizes the conformation of the head with respect to the body. The protein is Small ribosomal subunit protein uS5 of Lawsonia intracellularis (strain PHE/MN1-00).